The following is a 79-amino-acid chain: Endothelin-2 (79 aa).

Positions 1-23 (PEQTAPYGLGNPPRRRRRSLPRR) are disordered. The interval 24-39 (CQCSSARDPSCATFCL) is endothelin-like. The disordered stretch occupies residues 51 to 79 (SRKSPADVFQTGKTGATRGELLQRLRDIS).

The protein belongs to the endothelin/sarafotoxin family.

Its subcellular location is the secreted. Its function is as follows. Endothelins are endothelium-derived vasoconstrictor peptides. This is Endothelin-2 (EDN2) from Macaca fascicularis (Crab-eating macaque).